Consider the following 442-residue polypeptide: Ribosomal protein uS12 methylthiotransferase RimO (442 aa).

The MTTase N-terminal domain maps to 8–118 (PKVGFVSLGC…VLGHVHKYVE (111 aa)). Positions 17, 53, 82, 150, 154, and 157 each coordinate [4Fe-4S] cluster. One can recognise a Radical SAM core domain in the interval 136–373 (LTPRHYAYLK…MELQQQVSIR (238 aa)). The TRAM domain occupies 376–442 (ARKVGKEMLV…EYDLWASLID (67 aa)).

This sequence belongs to the methylthiotransferase family. RimO subfamily. [4Fe-4S] cluster is required as a cofactor.

The protein localises to the cytoplasm. It carries out the reaction L-aspartate(89)-[ribosomal protein uS12]-hydrogen + (sulfur carrier)-SH + AH2 + 2 S-adenosyl-L-methionine = 3-methylsulfanyl-L-aspartate(89)-[ribosomal protein uS12]-hydrogen + (sulfur carrier)-H + 5'-deoxyadenosine + L-methionine + A + S-adenosyl-L-homocysteine + 2 H(+). Catalyzes the methylthiolation of an aspartic acid residue of ribosomal protein uS12. The sequence is that of Ribosomal protein uS12 methylthiotransferase RimO from Aeromonas hydrophila subsp. hydrophila (strain ATCC 7966 / DSM 30187 / BCRC 13018 / CCUG 14551 / JCM 1027 / KCTC 2358 / NCIMB 9240 / NCTC 8049).